A 101-amino-acid polypeptide reads, in one-letter code: NADH-quinone oxidoreductase subunit K (101 aa).

Helical transmembrane passes span 4 to 24 (LAHFLVLGAILFAISIVGIFL), 30 to 50 (IVLLMAIELMLLAVNINFVAF), and 61 to 81 (VFVFFILTVAAAESAIGLAIL).

It belongs to the complex I subunit 4L family. NDH-1 is composed of 14 different subunits. Subunits NuoA, H, J, K, L, M, N constitute the membrane sector of the complex.

The protein resides in the cell inner membrane. It catalyses the reaction a quinone + NADH + 5 H(+)(in) = a quinol + NAD(+) + 4 H(+)(out). Its function is as follows. NDH-1 shuttles electrons from NADH, via FMN and iron-sulfur (Fe-S) centers, to quinones in the respiratory chain. The immediate electron acceptor for the enzyme in this species is believed to be ubiquinone. Couples the redox reaction to proton translocation (for every two electrons transferred, four hydrogen ions are translocated across the cytoplasmic membrane), and thus conserves the redox energy in a proton gradient. This is NADH-quinone oxidoreductase subunit K from Cupriavidus necator (strain ATCC 17699 / DSM 428 / KCTC 22496 / NCIMB 10442 / H16 / Stanier 337) (Ralstonia eutropha).